A 362-amino-acid polypeptide reads, in one-letter code: GTP 3',8-cyclase (362 aa).

Residues 8-228 form the Radical SAM core domain; it reads SLGRPLRDLR…ARISSHWPID (221 aa). Arg17 lines the GTP pocket. Residues Cys24 and Cys28 each coordinate [4Fe-4S] cluster. Residue Tyr30 participates in S-adenosyl-L-methionine binding. Cys31 contacts [4Fe-4S] cluster. Arg71 serves as a coordination point for GTP. Residue Gly75 participates in S-adenosyl-L-methionine binding. Thr102 contributes to the GTP binding site. Ser126 contributes to the S-adenosyl-L-methionine binding site. Lys164 contacts GTP. Met198 serves as a coordination point for S-adenosyl-L-methionine. The [4Fe-4S] cluster site is built by Cys262 and Cys265. 267–269 provides a ligand contact to GTP; sequence RLR. Position 279 (Cys279) interacts with [4Fe-4S] cluster. Positions 325–362 are disordered; the sequence is ALDSDGSREDADESEASAVPGRSTHPGHRKVEMSYIGG.

Belongs to the radical SAM superfamily. MoaA family. Monomer and homodimer. Requires [4Fe-4S] cluster as cofactor.

It catalyses the reaction GTP + AH2 + S-adenosyl-L-methionine = (8S)-3',8-cyclo-7,8-dihydroguanosine 5'-triphosphate + 5'-deoxyadenosine + L-methionine + A + H(+). It participates in cofactor biosynthesis; molybdopterin biosynthesis. Catalyzes the cyclization of GTP to (8S)-3',8-cyclo-7,8-dihydroguanosine 5'-triphosphate. This Acidothermus cellulolyticus (strain ATCC 43068 / DSM 8971 / 11B) protein is GTP 3',8-cyclase.